Here is a 188-residue protein sequence, read N- to C-terminus: MQVPAVLGEPIRFVLNWGRRYSLWVFNFGLACCAIEFIATSMSRHDFMRLGVIPFAHGPRQADLMVVSGTVTDKMAPAIKRLYDQMPEPKYVISFGACSNCGGPYWDSYSVTKGVDQLIPVDVYVPGCPPRPEALLHGILRLQEKIAAEEAGVGGVSRPDALASPADALPPRAADSLTAPPVRPPDPS.

Positions 32, 33, 98, and 128 each coordinate [4Fe-4S] cluster. Residues 153-188 (VGGVSRPDALASPADALPPRAADSLTAPPVRPPDPS) form a disordered region. The span at 157–177 (SRPDALASPADALPPRAADSL) shows a compositional bias: low complexity.

It belongs to the complex I 20 kDa subunit family. NDH-1 is composed of 14 different subunits. Subunits NuoB, C, D, E, F, and G constitute the peripheral sector of the complex. Requires [4Fe-4S] cluster as cofactor.

The protein localises to the cell membrane. It carries out the reaction a quinone + NADH + 5 H(+)(in) = a quinol + NAD(+) + 4 H(+)(out). In terms of biological role, NDH-1 shuttles electrons from NADH, via FMN and iron-sulfur (Fe-S) centers, to quinones in the respiratory chain. The immediate electron acceptor for the enzyme in this species is believed to be a menaquinone. Couples the redox reaction to proton translocation (for every two electrons transferred, four hydrogen ions are translocated across the cytoplasmic membrane), and thus conserves the redox energy in a proton gradient. In Salinispora tropica (strain ATCC BAA-916 / DSM 44818 / JCM 13857 / NBRC 105044 / CNB-440), this protein is NADH-quinone oxidoreductase subunit B 1 (nuoB1).